The sequence spans 611 residues: Probable potassium transport system protein Kup (611 aa).

The next 13 membrane-spanning stretches (helical) occupy residues 24 to 44, 55 to 75, 102 to 122, 143 to 163, 175 to 195, 218 to 238, 252 to 272, 275 to 295, 296 to 316, 344 to 364, 374 to 394, 400 to 420, and 423 to 443; these read LVFG…FLFL, VSLI…FLAM, VAVF…ECVI, LIAQ…LFLF, FGPV…ISVA, LLGF…EALF, AWGF…AYLL, TDVI…LYIP, FLLL…SGIF, IYIN…LLIF, YGLA…AIFL, LYMG…LSTV, and ITHG…IVII.

This sequence belongs to the HAK/KUP transporter (TC 2.A.72) family.

It localises to the cell membrane. It catalyses the reaction K(+)(in) + H(+)(in) = K(+)(out) + H(+)(out). Transport of potassium into the cell. Likely operates as a K(+):H(+) symporter. The polypeptide is Probable potassium transport system protein Kup (Methanospirillum hungatei JF-1 (strain ATCC 27890 / DSM 864 / NBRC 100397 / JF-1)).